Consider the following 5085-residue polypeptide: Protein piccolo (5085 aa).

The segment covering 1–20 has biased composition (low complexity); it reads MGNEASLEGEGLPEGLAAAA. Disordered regions lie at residues 1 to 142 and 173 to 516; these read MGNE…DFKE and DLIS…TPAQ. Pro residues predominate over residues 92 to 101; that stretch reads PGKPPDPGRP. Composition is skewed to basic and acidic residues over residues 110 to 121, 132 to 142, and 184 to 198; these read RTTDTFRSEQKL, KESKSRTDFKE, and ETTKKQKVVQKEQGK. Phosphoserine is present on residues Ser211 and Ser231. The segment covering 227 to 240 has biased composition (polar residues); that stretch reads QQDSSPKSVSSQQA. Residues 253–268 show a composition bias toward low complexity; the sequence is PSQQSPAQTPAQQASP. Polar residues-rich tracts occupy residues 275 to 285, 318 to 332, and 375 to 391; these read QPGSAKATVQQ, KTSSSQQPGPKSLAQ, and TPAQQSGPGKTPAQQPG. The segment at 372–491 is 12 X 10 AA tandem approximate repeats of P-A-K-P-Q-P-Q-Q-P-X; the sequence is PTKTPAQQSG…LAKPSAQQPT (120 aa). The span at 392–408 shows a compositional bias: pro residues; it reads PTKPSPQQPIPAKPQPQ. Low complexity predominate over residues 409 to 423; that stretch reads QPVATKTQPQQSAPA. Over residues 424–472 the composition is skewed to pro residues; sequence KPQPQQPAPAKPQPQQPTPAKPQPQPPTPAKPQPQPPTATKPQPQPPTA. Over residues 486-499 the composition is skewed to polar residues; sequence SAQQPTKSISQTVT. The C4-type zinc-finger motif lies at 523 to 547; the sequence is CPLCNTTELLLHIPEKANFNTCTEC. 5 disordered regions span residues 586–880, 896–1012, 1069–1357, 1373–1604, and 1622–1815; these read AAIP…TVTG, LIST…ACPL, QLGD…PSDL, STLV…EELV, and TIAD…SDPE. Over residues 596 to 613 the composition is skewed to low complexity; the sequence is PKAATAPTATASKSPVPS. Residues 618–654 are compositionally biased toward basic and acidic residues; it reads PKKEPPSKQDSPKALESKKPPEPKKPPEPKKPPEPKK. Low complexity predominate over residues 672-682; sequence APQLPVAEALP. Pro residues predominate over residues 683-693; that stretch reads EPAPPKEPSGP. Over residues 705-717 the composition is skewed to basic and acidic residues; it reads VEPKQPKMTETRA. Positions 718–767 are enriched in polar residues; it reads DIQSSSTTKPDILSSQVQSQAQVKTASPLKTDSAKPSQSFPPTGEKTTPL. The segment covering 790-808 has biased composition (basic and acidic residues); the sequence is ESKDPKHIDPIQKKDEPKK. A phosphoserine mark is found at Ser857 and Ser869. Polar residues-rich tracts occupy residues 867-878, 896-906, and 917-936; these read PKSQPTTPQETV, LISTAGQQGPH, and QAPTPSQSPAAQGPAKSTGQ. The residue at position 873 (Thr873) is a Phosphothreonine. Residues 990-1004 are compositionally biased toward basic and acidic residues; it reads EPEKAVPAHKPDKTT. Residues 1010–1033 form a C4-type zinc finger; sequence CPLCRTELNLGSQEPPNFNTCTEC. The segment covering 1077-1092 has biased composition (pro residues); sequence PPAPSGPKASPMPAPA. Over residues 1110–1129 the composition is skewed to basic and acidic residues; the sequence is KEAEGKTEAEKPVPEKETAS. At Thr1133 the chain carries Phosphothreonine. Composition is skewed to basic and acidic residues over residues 1141-1150, 1157-1199, and 1274-1295; these read QKLEESEGKK, PEKK…KLPP, and SSKDGQGERSKEKTEKEEDKSD. The span at 1300-1318 shows a compositional bias: polar residues; the sequence is QQPKSPQGLSDTGYSSDGI. A phosphoserine mark is found at Ser1304, Ser1314, Ser1315, Ser1344, Ser1346, Ser1349, Ser1350, and Ser1353. A compositionally biased stretch (basic and acidic residues) spans 1331-1345; it reads SDEKDLLKGLKKDSF. The span at 1346–1355 shows a compositional bias: low complexity; that stretch reads SQESSPSSPS. The segment covering 1378–1396 has biased composition (basic and acidic residues); sequence EKAEKKTQPQKISPEKPQD. The segment covering 1397–1407 has biased composition (polar residues); it reads QQKTQTASETL. The span at 1417 to 1456 shows a compositional bias: basic and acidic residues; the sequence is KESQEKKVSPKKDSEQGFPSRKEHKEKPELVDDLSPRRAS. A phosphoserine mark is found at Ser1451, Ser1463, Ser1464, Ser1466, Ser1469, Ser1493, Ser1496, Ser1517, and Ser1519. A compositionally biased stretch (acidic residues) spans 1511–1523; it reads SADEDASGSEDEE. Position 1564 is a phosphothreonine (Thr1564). A phosphoserine mark is found at Ser1565, Ser1575, and Ser1587. A compositionally biased stretch (acidic residues) spans 1578-1587; that stretch reads DEDDETFDES. Basic and acidic residues predominate over residues 1588–1599; the sequence is PELKFRETKSQE. A compositionally biased stretch (polar residues) spans 1622-1635; that stretch reads TIADKYSSESSQKK. The span at 1640–1650 shows a compositional bias: acidic residues; sequence FDEEPELEMES. Ser1650 bears the Phosphoserine mark. Thr1652 bears the Phosphothreonine mark. Phosphoserine is present on residues Ser1654 and Ser1659. Over residues 1662–1679 the composition is skewed to polar residues; sequence EGSSSLHASSFTPGTSPT. Over residues 1719–1732 the composition is skewed to acidic residues; that stretch reads DSSEEEELREEEEL. 2 positions are modified to phosphoserine: Ser1720 and Ser1721. Basic and acidic residues predominate over residues 1733-1746; sequence LKEQEKQRELEQQQ. Phosphothreonine is present on Thr1772. At Ser1778 the chain carries Phosphoserine. Positions 1787-1802 are enriched in basic and acidic residues; the sequence is EELRQAAEMEELHRSS. Ser1807, Ser1812, Ser1820, and Ser1841 each carry phosphoserine. Disordered stretches follow at residues 2116 to 2139, 2275 to 2385, and 2456 to 2486; these read PSESATSVPPSDTPSLTSSISSVC, ELTK…PTYP, and KPPIAPKPAVPQIPVTTQKPTDTCPKPTGLS. Low complexity predominate over residues 2121–2139; it reads TSVPPSDTPSLTSSISSVC. Positions 2350–2384 are enriched in pro residues; sequence QPPPPPPPPPPSPSTSSPPPTPPLPPATSPKPPTY. Position 2511 is a phosphoserine (Ser2511). A glycan (O-linked (GlcNAc) threonine) is linked at Thr2702. O-linked (GlcNAc) serine glycosylation is present at Ser2976. Thr3014 is modified (phosphothreonine). Disordered stretches follow at residues 3350–3457 and 3503–3572; these read KEEK…PLSK and KTYK…LYSP. At Ser3374 the chain carries Phosphoserine. Residues 3377–3386 are compositionally biased toward basic and acidic residues; the sequence is DDPRNLKKIV. Ser3388 carries the phosphoserine modification. 2 positions are modified to phosphothreonine: Thr3392 and Thr3419. The span at 3419–3428 shows a compositional bias: acidic residues; that stretch reads TDDEDQDEWD. The segment covering 3511–3523 has biased composition (polar residues); the sequence is GCQTETDSDTQSP. 11 positions are modified to phosphoserine: Ser3522, Ser3530, Ser3561, Ser3565, Ser3571, Ser3574, Ser3577, Ser3598, Ser3624, Ser3626, and Ser3632. Disordered regions lie at residues 3602–3695 and 3774–3816; these read VLHP…ASRR and AEDR…FIPP. 2 stretches are compositionally biased toward polar residues: residues 3647 to 3663 and 3679 to 3691; these read EGFTTKGSQTMTASGTQ and STGTQSTYSTMGT. At Ser3781 the chain carries Phosphoserine. Over residues 3791 to 3803 the composition is skewed to basic and acidic residues; it reads SRVESQHGVERPR. The segment covering 3805–3816 has biased composition (polar residues); that stretch reads APQTEFSQFIPP. Phosphoserine occurs at positions 4034 and 4150. Disordered regions lie at residues 4225–4248 and 4272–4291; these read ADKPYSSGSRSRPSSRPSSVYGLD and VSFGHSSSSARTKPTSLPIS. Over residues 4228–4248 the composition is skewed to low complexity; sequence PYSSGSRSRPSSRPSSVYGLD. The segment covering 4275–4291 has biased composition (polar residues); it reads GHSSSSARTKPTSLPIS. Phosphoserine is present on residues Ser4304, Ser4308, Ser4311, Ser4340, and Ser4376. Positions 4335–4357 are disordered; that stretch reads RDQFGSSHSLPEVQQHMREESRT. Residues 4442 to 4536 form the PDZ domain; sequence RVKITRDFKD…EAEICVRLDL (95 aa). Residues 4589–4638 are disordered; that stretch reads VEKGSHAHSGPTSAGSSSVPSPGQPGSPSVSKKKHSSTKPTDGPKAASHP. The span at 4595–4618 shows a compositional bias: low complexity; it reads AHSGPTSAGSSSVPSPGQPGSPSV. Ser4609 is modified (phosphoserine). Positions 4639–4768 constitute a C2 1 domain; that stretch reads ITGEIQLQIN…SHLDNTPRWY (130 aa). Ca(2+) contacts are provided by Asp4668 and Asp4674. Ser4723 carries the post-translational modification Phosphoserine. The Ca(2+) site is built by Asp4738, Asp4740, Ser4743, and Asp4746. Disordered regions lie at residues 4775-4851 and 4874-4908; these read ESID…SVAQ and QPTKPTNHRPAESSVSTGSSGSSVGSGYSVDSEGS. Low complexity-rich tracts occupy residues 4783–4795 and 4822–4832; these read HSSQNSQQSPKPS and SSPGSSKSSSE. Positions 4840–4851 are enriched in polar residues; sequence PSRSQSKTSVAQ. Over residues 4886–4908 the composition is skewed to low complexity; sequence SSVSTGSSGSSVGSGYSVDSEGS. The region spanning 4950-5075 is the C2 2 domain; the sequence is VMGEIKLALK…DLRKRIVNWH (126 aa).

Interacts with BSN, ERC2/CAST1, RIMS1 and UNC13A. Interacts (via C-terminus) with TRIO (via N-terminus). Interacts with CTBP1. Interacts with SIAH1; this interaction negatively regulates SIAH1 E3 ligase activity. Directly interacts with GIT1 and GIT2. Requires Ca(2+) as cofactor. In terms of tissue distribution, expressed in brain (at protein level).

It localises to the presynaptic active zone. In terms of biological role, scaffold protein of the presynaptic cytomatrix at the active zone (CAZ) which is the place in the synapse where neurotransmitter is released. After synthesis, participates in the formation of Golgi-derived membranous organelles termed Piccolo-Bassoon transport vesicles (PTVs) that are transported along axons to sites of nascent synaptic contacts. At the presynaptic active zone, regulates the spatial organization of synaptic vesicle cluster, the protein complexes that execute membrane fusion and compensatory endocytosis. Organizes as well the readily releasable pool of synaptic vesicles and safeguards a fraction of them to be not immediately available for action potential-induced release. Also functions in processes other than assembly such as the regulation of specific presynaptic protein ubiquitination by interacting with SIAH1 or the regulation of presynaptic autophagy. Also mediates synapse to nucleus communication leading to reconfiguration of gene expression by associating with the transcriptional corepressor CTBP1 and by subsequently reducing the size of its pool available for nuclear import. This is Protein piccolo (Pclo) from Rattus norvegicus (Rat).